The chain runs to 1033 residues: Potassium-transporting ATPase alpha chain 2 (1033 aa).

Residues 1–96 (MRRKTLEIYS…NALSPPKQTP (96 aa)) are Cytoplasmic-facing. The helical transmembrane segment at 97–117 (EIIKFLKQMIGGFSILLWVGA) threads the bilayer. The Lumenal portion of the chain corresponds to 118–140 (ILCWIAYGIQYASNQSGSLDNVY). The chain crosses the membrane as a helical span at residues 141–161 (LGVVLALVVILTGIFAYYQEA). Residues 162–297 (KSTNIMSSFS…NEKTPIATEI (136 aa)) are Cytoplasmic-facing. Residues 298 to 317 (EHFVHIVAGVAVSIGILFFI) form a helical membrane-spanning segment. The Lumenal segment spans residues 318-329 (IAVSLKYRVLDS). The helical transmembrane segment at 330 to 347 (IIFLIGIIVANVPEGLLA) threads the bilayer. At 348 to 781 (TVTVTLSLTA…EEGRLIFDNL (434 aa)) the chain is on the cytoplasmic side. The 4-aspartylphosphate intermediate role is filled by Asp385. 2 residues coordinate Mg(2+): Asp726 and Asp730. The chain crosses the membrane as a helical span at residues 782 to 801 (KKTIAYTLTKNIAELCPFLV). Residues 802–811 (YIIVGLPLPI) lie on the Lumenal side of the membrane. A helical membrane pass occupies residues 812–832 (GTITILFIDLGTDIIPSIALA). Topologically, residues 833–852 (YEKVESDIMNRKPRHKKKDR) are cytoplasmic. Residues 853–875 (LVNHQLAIYSYLHIGLMQALGAF) traverse the membrane as a helical segment. Residues 876-927 (LVYFTVYAQQGFWPTSLIQLRVKWEQDYVNDLEDSYGQQWTRYQRKYLEWTG) are Lumenal-facing. A helical membrane pass occupies residues 928-947 (YTAFFVGIMVQQIADLIIRK). At 948–961 (TRRNSIFQQGLFRN) the chain is on the cytoplasmic side. Ser952 is modified (phosphoserine; by PKA). The helical transmembrane segment at 962 to 980 (KVIWVGITSQIIVALILSC) threads the bilayer. Over 981–995 (GLGSITALNFTMLRV) the chain is Lumenal. Residues 996–1016 (QYWFVAVPHAILIWVYDEVRK) form a helical membrane-spanning segment. Residues 1017 to 1033 (LFLRLYPGSWWDKNMYY) lie on the Cytoplasmic side of the membrane.

Belongs to the cation transport ATPase (P-type) (TC 3.A.3) family. Type IIC subfamily. As to quaternary structure, composed of two subunits: alpha (catalytic) and beta. As to expression, found in skin, kidney and distal colon.

The protein localises to the membrane. The catalysed reaction is K(+)(out) + ATP + H2O + H(+)(in) = K(+)(in) + ADP + phosphate + 2 H(+)(out). Catalyzes the hydrolysis of ATP coupled with the exchange of H(+) and K(+) ions across the plasma membrane. Responsible for potassium absorption in various tissues. The chain is Potassium-transporting ATPase alpha chain 2 (ATP12A) from Cavia porcellus (Guinea pig).